A 393-amino-acid chain; its full sequence is MDDSTPYPVPQELYIPQKMKAFMAEPQGCALVAALEGQFQCSIVVINDHLSVISSADGVAVDINQIEKILRDVWRKRDVQIMIREAALNASCTHICHTLLPRAYCAVVLFFSSDLQRRSRCTDIIIDQFTGKVTMFGTEQAVNKAREMMIECLTEHFGLLEMNIPPTQRTTRMGYTNSYNPEIRTHLPPNSFLNSVFPMGEPNAILTSTPPTTSIMDEPLLSASLEKHLLFPSDFSVPPPRLSPVQELPLTPPKTCVVEKIKQWIPTTEVGKILGNRAAVKKHIERQFNCVITVHTEVQSSFGATPVEIVAQNKEQCQEARNAVMSLMQSHQDKPASNPPDSGFSTPGSPFTSDSSSTTPEKRGNSRQYHRGSFRDQPKVMLALTPRKLSPSD.

Positions 12–76 (ELYIPQKMKA…EKILRDVWRK (65 aa)) are KH 1-like. The interval 79-157 (VQIMIREAAL…MMIECLTEHF (79 aa)) is KH 2-like. Residues 259 to 322 (EKIKQWIPTT…NKEQCQEARN (64 aa)) are KH 3-like. The segment at 328–393 (MQSHQDKPAS…LTPRKLSPSD (66 aa)) is disordered. Low complexity predominate over residues 345–359 (STPGSPFTSDSSSTT).

May interact with wago-4. In terms of tissue distribution, expressed throughout the germline and in oocytes (at protein level).

It localises to the cytoplasm. The protein resides in the perinuclear region. Its function is as follows. RNA-binding protein which binds to its own mRNA and target mRNAs to negatively regulate gene expression to modulate apoptosis and differentiation in the germline. Negatively regulates the expression of the argonaute protein wago-4, and may thus play a role in RNA-mediated gene silencing (RNAi) in the germline. This Caenorhabditis elegans protein is Messenger RNA-binding inhibitor of apoptosis 1.